A 237-amino-acid polypeptide reads, in one-letter code: Leucyl/phenylalanyl-tRNA--protein transferase (237 aa).

The protein belongs to the L/F-transferase family.

It is found in the cytoplasm. The enzyme catalyses N-terminal L-lysyl-[protein] + L-leucyl-tRNA(Leu) = N-terminal L-leucyl-L-lysyl-[protein] + tRNA(Leu) + H(+). It catalyses the reaction N-terminal L-arginyl-[protein] + L-leucyl-tRNA(Leu) = N-terminal L-leucyl-L-arginyl-[protein] + tRNA(Leu) + H(+). The catalysed reaction is L-phenylalanyl-tRNA(Phe) + an N-terminal L-alpha-aminoacyl-[protein] = an N-terminal L-phenylalanyl-L-alpha-aminoacyl-[protein] + tRNA(Phe). Functionally, functions in the N-end rule pathway of protein degradation where it conjugates Leu, Phe and, less efficiently, Met from aminoacyl-tRNAs to the N-termini of proteins containing an N-terminal arginine or lysine. The chain is Leucyl/phenylalanyl-tRNA--protein transferase from Shewanella baltica (strain OS223).